Here is a 433-residue protein sequence, read N- to C-terminus: Protein slt1 (433 aa).

3 disordered regions span residues 159–184 (SPEE…SEYA), 200–234 (NAPE…EELS), and 252–433 (SNKR…DEDA). Composition is skewed to polar residues over residues 172 to 184 (DQQT…SEYA) and 215 to 228 (TLPN…QASV). Residues Ser-227, Ser-229, and Ser-269 each carry the phosphoserine modification. Residues 343-353 (IDTKAGEKLTD) are compositionally biased toward basic and acidic residues. Residues 385–421 (EGSNNHEQGSFNEPKSNVDSNDSASPKRPSSQASLRH) show a composition bias toward polar residues. Phosphoserine occurs at positions 409, 415, and 418.

This is Protein slt1 (slt1) from Schizosaccharomyces pombe (strain 972 / ATCC 24843) (Fission yeast).